A 322-amino-acid polypeptide reads, in one-letter code: Pilin gene-inverting protein (322 aa).

In terms of biological role, may be the site-specific invertase required for pilin gene inversion. Moraxella can express either a Q or I pilin; the inversion of 2 kb of DNA determines which pilin is expressed. In Moraxella bovis, this protein is Pilin gene-inverting protein (piv).